The sequence spans 470 residues: MPVDFVGIPAQKADMNQAAFFLYNSATHGREPFRPIDPKHVKIYVCGPTVYDLAHIGNARSMVVFDVLARVLRRLYPRVTYARNITDVDDKINARARESGVSIDEITARTTADFHADMASLGNLPPDIEPRATAHIAEMILLIEKLIAQEHAYETHGEGEGHVLFSVASDPSYGSLSNRSPDELLAGARIDPAPYKKDPGDFVLWKPSADDQPGWDSPWGRGRPGWHIECSAMSWRYLGEDFDIHGGGGDLIFPHHENECAQSRCAFPGSHFAHYWMHSAMLLLDGEKMSKSLGNVLTVRDLLGQADGEAIRLLFLKTHYRGVLDFRYEALKEAGKELDRFYRALQAHPALPDLDETVENPVLEALRDDLNTPQALSLMHGLAYAALGGDALAAAQLKEGGMLMGLFTREAEAWFQRGINPDEIAQRIADRLQARKDRNFAEADRIRNELAEAGILLEDGPSGTTWRRAS.

Zn(2+) is bound at residue C46. The 'HIGH' region signature appears at 48–58 (PTVYDLAHIGN). The Zn(2+) site is built by C230, H255, and E259. Positions 288–292 (KMSKS) match the 'KMSKS' region motif. K291 serves as a coordination point for ATP.

This sequence belongs to the class-I aminoacyl-tRNA synthetase family. In terms of assembly, monomer. Zn(2+) is required as a cofactor.

The protein resides in the cytoplasm. It catalyses the reaction tRNA(Cys) + L-cysteine + ATP = L-cysteinyl-tRNA(Cys) + AMP + diphosphate. The chain is Cysteine--tRNA ligase from Granulibacter bethesdensis (strain ATCC BAA-1260 / CGDNIH1).